The sequence spans 221 residues: Oxaloacetate tautomerase FAHD1, mitochondrial (221 aa).

A mitochondrion-targeting transit peptide spans 1-24 (MASTKPLSRFWEWGKNIVCVGRNY). Oxalate is bound at residue Arg22. Ser37 carries the phosphoserine modification. Residues Glu68, Glu70, and Asp99 each contribute to the Mg(2+) site. An N6-acetyllysine modification is found at Lys110. An N6-succinyllysine modification is found at Lys112. Residue Lys120 participates in oxalate binding.

Belongs to the FAH family. As to quaternary structure, homodimer. The cofactor is Mg(2+). It depends on Mn(2+) as a cofactor. Ubiquitous with higher expression in the liver and the kidney (at protein level).

Its subcellular location is the mitochondrion. The protein resides in the cytoplasm. The protein localises to the cytosol. It catalyses the reaction oxaloacetate = enol-oxaloacetate. The catalysed reaction is oxaloacetate + H(+) = pyruvate + CO2. The enzyme catalyses a 3-acylpyruvate + H2O = a carboxylate + pyruvate + H(+). It carries out the reaction acetylpyruvate + H2O = acetate + pyruvate + H(+). It catalyses the reaction 3-fumarylpyruvate + H2O = fumarate + pyruvate + H(+). Its activity is regulated as follows. Oxaloacetate decarboxylation is potently and competitively inhibited by oxalate. In terms of biological role, tautomerase that converts enol-oxaloacetate, a strong inhibitor of succinate dehydrogenase, to the physiological keto form of oxaloacetate. It is thereby required to maximize aerobic respiration efficiency by preventing succinate dehydrogenase inhibition. Also acts as a weak oxaloacetate decarboxylase (ODx), catalyzing the decarboxylation of oxaloacetate (OAA) to pyruvate and CO(2), and as such is likely a regulatory enzyme in the TCA cycle. Also displays acylpyruvase activity, being able to hydrolyze acetylpyruvate and fumarylpyruvate in vitro. This is Oxaloacetate tautomerase FAHD1, mitochondrial from Mus musculus (Mouse).